The primary structure comprises 1167 residues: ATP-dependent helicase/deoxyribonuclease subunit B (1167 aa).

The UvrD-like helicase ATP-binding domain maps to 1 to 359 (MSLRFLLGRS…IRQTEAYRDL (359 aa)). Residue 8-15 (GRSGSGKT) participates in ATP binding. A UvrD-like helicase C-terminal domain is found at 282–588 (VNRRHQDKAL…EFALVPPAID (307 aa)). [4Fe-4S] cluster contacts are provided by C803, C1125, C1128, and C1134.

It belongs to the helicase family. AddB/RexB type 1 subfamily. Heterodimer of AddA and AddB. Requires Mg(2+) as cofactor. It depends on [4Fe-4S] cluster as a cofactor.

Functionally, the heterodimer acts as both an ATP-dependent DNA helicase and an ATP-dependent, dual-direction single-stranded exonuclease. Recognizes the chi site generating a DNA molecule suitable for the initiation of homologous recombination. The AddB subunit has 5' -&gt; 3' nuclease activity but not helicase activity. The chain is ATP-dependent helicase/deoxyribonuclease subunit B from Geobacillus thermodenitrificans (strain NG80-2).